An 81-amino-acid polypeptide reads, in one-letter code: Small ribosomal subunit protein bS16 (81 aa).

The protein belongs to the bacterial ribosomal protein bS16 family.

This is Small ribosomal subunit protein bS16 from Colwellia psychrerythraea (strain 34H / ATCC BAA-681) (Vibrio psychroerythus).